The primary structure comprises 308 residues: Vacuolar lysine transporter YPQ1 (308 aa).

Residues 1 to 12 (MQLVPLELNRST) are Vacuolar-facing. N-linked (GlcNAc...) asparagine glycosylation occurs at Asn9. In terms of domain architecture, PQ-loop 1 spans 10-76 (RSTLSGISGS…QHLLSTMIIL (67 aa)). The helical transmembrane segment at 13–33 (LSGISGSISISCWIIVFVPQI) threads the bilayer. At 34–44 (YENFYRKSSDG) the chain is on the cytoplasmic side. Residues 45–65 (LSLLFVVLWLAGDVFNLMGAV) form a helical membrane-spanning segment. The Vacuolar portion of the chain corresponds to 66 to 68 (MQH). The helical transmembrane segment at 69 to 89 (LLSTMIILAAYYTVADIILLG) threads the bilayer. The Cytoplasmic portion of the chain corresponds to 90–167 (QCLWYDNEEK…EVNSRNLIKD (78 aa)). The chain crosses the membrane as a helical span at residues 168 to 188 (IFIVSGVVFVGFISWYVTYCV). Asn189 carries N-linked (GlcNAc...) asparagine glycosylation. At 189 to 205 (NYTQPPPVEDPSLPVPE) the chain is on the vacuolar side. The helical transmembrane segment at 206-226 (LQINWMAQIFGYLSALLYLGS) threads the bilayer. Residues 211–274 (MAQIFGYLSA…ISLDWKYLIM (64 aa)) enclose the PQ-loop 2 domain. The Cytoplasmic segment spans residues 227 to 244 (RIPQILLNFKRKSCEGIS). A helical transmembrane segment spans residues 245 to 265 (FLFFLFACLGNTTFIFSVIVI). The Vacuolar segment spans residues 266–277 (SLDWKYLIMNAS). N-linked (GlcNAc...) asparagine glycosylation is present at Asn275. The helical transmembrane segment at 278–298 (WLVGSIGTLFMDFVIFSQFFI) threads the bilayer. Residues 299–308 (YKRNKKFILN) lie on the Cytoplasmic side of the membrane.

The protein belongs to the laat-1 family.

The protein resides in the vacuole membrane. In terms of biological role, amino acid transporter that moves lysine into the vacuole. May also contribute to low affinity arginine import into the vacuole. Has also been suggested to mediate export of cationic amino acids from the vacuole. May function as an amino acid/proton antiporter. This chain is Vacuolar lysine transporter YPQ1 (YPQ1), found in Saccharomyces cerevisiae (strain ATCC 204508 / S288c) (Baker's yeast).